The following is a 104-amino-acid chain: Large ribosomal subunit protein bL21 (104 aa).

It belongs to the bacterial ribosomal protein bL21 family. Part of the 50S ribosomal subunit. Contacts protein L20.

Functionally, this protein binds to 23S rRNA in the presence of protein L20. In Thermotoga sp. (strain RQ2), this protein is Large ribosomal subunit protein bL21.